Reading from the N-terminus, the 243-residue chain is NAD-dependent protein deacetylase (243 aa).

The 243-residue stretch at 1 to 243 (MKHDLETLKH…VSVVKSLMTE (243 aa)) folds into the Deacetylase sirtuin-type domain. Positions 24, 35, 36, 105, 107, 108, and 123 each coordinate NAD(+). F35 is a binding site for nicotinamide. Nicotinamide is bound by residues I107 and D108. H123 serves as the catalytic Proton acceptor. Positions 131, 134, 151, and 154 each coordinate Zn(2+). NAD(+)-binding residues include S192, S193, N215, and D232.

This sequence belongs to the sirtuin family. Class U subfamily. The cofactor is Zn(2+).

Its subcellular location is the cytoplasm. The catalysed reaction is N(6)-acetyl-L-lysyl-[protein] + NAD(+) + H2O = 2''-O-acetyl-ADP-D-ribose + nicotinamide + L-lysyl-[protein]. Functionally, NAD-dependent protein deacetylase which modulates the activities of several enzymes which are inactive in their acetylated form. The protein is NAD-dependent protein deacetylase of Staphylococcus aureus (strain COL).